Reading from the N-terminus, the 318-residue chain is HPr kinase/phosphorylase (318 aa).

Catalysis depends on residues H143 and K164. 158–165 (GKSGVGKS) is an ATP binding site. Position 165 (S165) interacts with Mg(2+). The active-site Proton acceptor; for phosphorylation activity. Proton donor; for dephosphorylation activity is D182. Residues 206–215 (MEIRGLGILN) form an important for the catalytic mechanism of both phosphorylation and dephosphorylation region. Position 207 (E207) interacts with Mg(2+). R248 is an active-site residue. Positions 269–274 (PVKPGR) are important for the catalytic mechanism of dephosphorylation.

This sequence belongs to the HPrK/P family. In terms of assembly, homohexamer. The cofactor is Mg(2+).

It carries out the reaction [HPr protein]-L-serine + ATP = [HPr protein]-O-phospho-L-serine + ADP + H(+). It catalyses the reaction [HPr protein]-O-phospho-L-serine + phosphate + H(+) = [HPr protein]-L-serine + diphosphate. Catalyzes the ATP- as well as the pyrophosphate-dependent phosphorylation of a specific serine residue in HPr, a phosphocarrier protein of the phosphoenolpyruvate-dependent sugar phosphotransferase system (PTS). HprK/P also catalyzes the pyrophosphate-producing, inorganic phosphate-dependent dephosphorylation (phosphorolysis) of seryl-phosphorylated HPr (P-Ser-HPr). The protein is HPr kinase/phosphorylase of Leptospira borgpetersenii serovar Hardjo-bovis (strain JB197).